Here is a 235-residue protein sequence, read N- to C-terminus: RAD9, HUS1, RAD1-interacting nuclear orphan protein 1 (235 aa).

Position 50 is a phosphoserine (S50). Residues 54–60 (SWVLPQF) carry the RAD1-binding motif motif. The disordered stretch occupies residues 66–106 (SRFPTHRKHHRDQARHPTRRSTCKFPRLTFESPESSSSETL). Basic residues predominate over residues 69 to 87 (PTHRKHHRDQARHPTRRST). The span at 96-106 (ESPESSSSETL) shows a compositional bias: low complexity. The D-box motif lies at 123 to 130 (RRPLVPLF). The interval 156–198 (QTPGSSVREDPISPDQKENSLPSCILGPRTPRTPEPGPVLVKD) is disordered. Over residues 162–173 (VREDPISPDQKE) the composition is skewed to basic and acidic residues. A KEN box motif is present at residues 171–175 (QKENS).

In terms of assembly, interacts (when phosphorylated by PLK1) with POLQ; promoting POLQ recruitment to DNA damage sites. Interacts with RAD1; interaction is direct and promotes association with the 9-1-1 (RAD9-RAD1-HUS1) complex. Interacts with RAD18. Interacts with TOPBP1. Interacts with UBE2N. Phosphorylated at Ser-50 by PLK1, promoting interaction with polymerase theta (POLQ). In terms of processing, ubiquitinated and degraded by the APC/C complex upon mitotic exit.

The protein resides in the nucleus. Its subcellular location is the chromosome. Its function is as follows. Involved in microhomology-mediated end-joining (MMEJ) DNA repair by promoting recruitment of polymerase theta (POLQ) to DNA damage sites during mitosis. MMEJ is an alternative non-homologous end-joining (NHEJ) machinery that takes place during mitosis to repair double-strand breaks in DNA that originate in S-phase. Accumulates in M-phase; following phosphorylation by PLK1, interacts with POLQ, enabling its recruitment to double-strand breaks for subsequent repair. Also involved in the DNA damage response (DDR) signaling in response to genotoxic stresses such as ionizing radiation (IR) during the S phase. Recruited to sites of DNA damage through interaction with the 9-1-1 cell-cycle checkpoint response complex and TOPBP1 in a ATR-dependent manner. Required for the progression of the G1 to S phase transition. Plays a role in the stimulation of CHEK1 phosphorylation. This Rattus norvegicus (Rat) protein is RAD9, HUS1, RAD1-interacting nuclear orphan protein 1 (Rhno1).